A 234-amino-acid chain; its full sequence is Thymidylate kinase (234 aa).

Residue 11-18 coordinates ATP; sequence GLEGSGKT.

The protein belongs to the thymidylate kinase family.

It carries out the reaction dTMP + ATP = dTDP + ADP. Its function is as follows. Phosphorylation of dTMP to form dTDP in both de novo and salvage pathways of dTTP synthesis. The chain is Thymidylate kinase from Wigglesworthia glossinidia brevipalpis.